A 167-amino-acid chain; its full sequence is Large ribosomal subunit protein uL10 (167 aa).

This sequence belongs to the universal ribosomal protein uL10 family. As to quaternary structure, part of the ribosomal stalk of the 50S ribosomal subunit. The N-terminus interacts with L11 and the large rRNA to form the base of the stalk. The C-terminus forms an elongated spine to which L12 dimers bind in a sequential fashion forming a multimeric L10(L12)X complex.

Functionally, forms part of the ribosomal stalk, playing a central role in the interaction of the ribosome with GTP-bound translation factors. This is Large ribosomal subunit protein uL10 from Yersinia enterocolitica serotype O:8 / biotype 1B (strain NCTC 13174 / 8081).